We begin with the raw amino-acid sequence, 460 residues long: 3-isopropylmalate dehydratase large subunit (460 aa).

Residues cysteine 341, cysteine 401, and cysteine 404 each contribute to the [4Fe-4S] cluster site.

The protein belongs to the aconitase/IPM isomerase family. LeuC type 1 subfamily. Heterodimer of LeuC and LeuD. [4Fe-4S] cluster is required as a cofactor.

It catalyses the reaction (2R,3S)-3-isopropylmalate = (2S)-2-isopropylmalate. It participates in amino-acid biosynthesis; L-leucine biosynthesis; L-leucine from 3-methyl-2-oxobutanoate: step 2/4. Its function is as follows. Catalyzes the isomerization between 2-isopropylmalate and 3-isopropylmalate, via the formation of 2-isopropylmaleate. This Phocaeicola vulgatus (strain ATCC 8482 / DSM 1447 / JCM 5826 / CCUG 4940 / NBRC 14291 / NCTC 11154) (Bacteroides vulgatus) protein is 3-isopropylmalate dehydratase large subunit.